Consider the following 185-residue polypeptide: Ribosome-recycling factor (185 aa).

It belongs to the RRF family.

Its subcellular location is the cytoplasm. Responsible for the release of ribosomes from messenger RNA at the termination of protein biosynthesis. May increase the efficiency of translation by recycling ribosomes from one round of translation to another. The polypeptide is Ribosome-recycling factor (Pectobacterium atrosepticum (strain SCRI 1043 / ATCC BAA-672) (Erwinia carotovora subsp. atroseptica)).